The following is a 219-amino-acid chain: Thiopurine S-methyltransferase (219 aa).

The S-adenosyl-L-methionine site is built by Trp-10, Leu-45, Glu-66, and Arg-123.

It belongs to the class I-like SAM-binding methyltransferase superfamily. TPMT family.

Its subcellular location is the cytoplasm. The enzyme catalyses S-adenosyl-L-methionine + a thiopurine = S-adenosyl-L-homocysteine + a thiopurine S-methylether.. The protein is Thiopurine S-methyltransferase of Bordetella petrii (strain ATCC BAA-461 / DSM 12804 / CCUG 43448).